We begin with the raw amino-acid sequence, 303 residues long: UDP-3-O-acyl-N-acetylglucosamine deacetylase (303 aa).

Zn(2+)-binding residues include H77, H236, and D240. The active-site Proton donor is the H263.

The protein belongs to the LpxC family. Requires Zn(2+) as cofactor.

The enzyme catalyses a UDP-3-O-[(3R)-3-hydroxyacyl]-N-acetyl-alpha-D-glucosamine + H2O = a UDP-3-O-[(3R)-3-hydroxyacyl]-alpha-D-glucosamine + acetate. Its pathway is glycolipid biosynthesis; lipid IV(A) biosynthesis; lipid IV(A) from (3R)-3-hydroxytetradecanoyl-[acyl-carrier-protein] and UDP-N-acetyl-alpha-D-glucosamine: step 2/6. Catalyzes the hydrolysis of UDP-3-O-myristoyl-N-acetylglucosamine to form UDP-3-O-myristoylglucosamine and acetate, the committed step in lipid A biosynthesis. This chain is UDP-3-O-acyl-N-acetylglucosamine deacetylase, found in Ruthia magnifica subsp. Calyptogena magnifica.